A 90-amino-acid chain; its full sequence is DNA-binding protein HU-1 (90 aa).

Thr-4 is subject to Phosphothreonine. The interval 55–90 is disordered; that stretch reads RSARKGRNPQTGEEIEIPATKNPAFKPGKQLKDAVN.

This sequence belongs to the bacterial histone-like protein family. As to quaternary structure, homodimer.

Histone-like DNA-binding protein which is capable of wrapping DNA to stabilize it, and thus to prevent its denaturation under extreme environmental conditions. This Halalkalibacterium halodurans (strain ATCC BAA-125 / DSM 18197 / FERM 7344 / JCM 9153 / C-125) (Bacillus halodurans) protein is DNA-binding protein HU-1 (hup1).